The sequence spans 575 residues: Putative diflavin flavoprotein A 4 (575 aa).

Residues 41 to 234 are zinc metallo-hydrolase; it reads QRGTTANSYL…LGARSYAPGH (194 aa). Residues 263 to 405 form the Flavodoxin-like domain; the sequence is VALLYTSAYG…AGATFAQTLK (143 aa). Residues 429–575 form a flavodoxin-reductase-like region; it reads VGRIIGSLCV…AVEHRKSGSH (147 aa).

The protein in the N-terminal section; belongs to the zinc metallo-hydrolase group 3 family. It in the C-terminal section; belongs to the flavodoxin reductase family. It depends on Fe cation as a cofactor.

Its function is as follows. Mediates electron transfer from NADH to oxygen, reducing it to water. This modular protein has 3 redox cofactors, in other organisms the same activity requires 2 or 3 proteins. The polypeptide is Putative diflavin flavoprotein A 4 (dfa4) (Nostoc sp. (strain PCC 7120 / SAG 25.82 / UTEX 2576)).